Here is a 329-residue protein sequence, read N- to C-terminus: N-acetyl-gamma-glutamyl-phosphate reductase (329 aa).

The active site involves Cys-155.

This sequence belongs to the NAGSA dehydrogenase family. Type 1 subfamily.

It is found in the cytoplasm. The enzyme catalyses N-acetyl-L-glutamate 5-semialdehyde + phosphate + NADP(+) = N-acetyl-L-glutamyl 5-phosphate + NADPH + H(+). Its pathway is amino-acid biosynthesis; L-arginine biosynthesis; N(2)-acetyl-L-ornithine from L-glutamate: step 3/4. Catalyzes the NADPH-dependent reduction of N-acetyl-5-glutamyl phosphate to yield N-acetyl-L-glutamate 5-semialdehyde. In Shewanella piezotolerans (strain WP3 / JCM 13877), this protein is N-acetyl-gamma-glutamyl-phosphate reductase.